Here is a 44-residue protein sequence, read N- to C-terminus: MSDKPDMAEIEKFDKAKLKKTETQEKNPLPSKETIEQEKQTSES.

2 stretches are compositionally biased toward basic and acidic residues: residues 1–25 and 33–44; these read MSDK…ETQE and ETIEQEKQTSES. The tract at residues 1–44 is disordered; it reads MSDKPDMAEIEKFDKAKLKKTETQEKNPLPSKETIEQEKQTSES. At Ser2 the chain carries N-acetylserine.

It belongs to the thymosin beta family. Spleen, kidney, heart, and oocytes.

The protein localises to the cytoplasm. It is found in the cytoskeleton. Functionally, plays an important role in the organization of the cytoskeleton. Binds to and sequesters actin monomers (G actin) and therefore inhibits actin polymerization. The protein is Thymosin beta-4 (tmsb4) of Xenopus laevis (African clawed frog).